Consider the following 453-residue polypeptide: Gamma-aminobutyric acid receptor subunit alpha-6 (453 aa).

Positions 1 to 19 are cleaved as a signal peptide; that stretch reads MVLLLPWLFIILWLENAQA. The Extracellular portion of the chain corresponds to 20–243; that stretch reads QLEDEGNFYS…FHLQRKMGYF (224 aa). Residue Asn-31 is glycosylated (N-linked (GlcNAc...) asparagine). Position 84 (Arg-84) interacts with 4-aminobutanoate. N-linked (GlcNAc...) asparagine glycans are attached at residues Asn-128 and Asn-141. Thr-147 serves as a coordination point for 4-aminobutanoate. A disulfide bridge connects residues Cys-156 and Cys-170. The chain crosses the membrane as a helical span at residues 244–264; sequence MIQIYTPCIMTVILSQVSFWI. The Cytoplasmic portion of the chain corresponds to 265–270; sequence NKESVP. A helical transmembrane segment spans residues 271 to 290; sequence ARTVFGITTVLTMTTLSISA. Topologically, residues 291–304 are extracellular; it reads RHSLPKVSYATAMD. The helical transmembrane segment at 305–325 threads the bilayer; the sequence is WFIAVCFAFVFSALIEFAAVN. At 326-422 the chain is on the cytoplasmic side; sequence YFTNLQSQKA…GTSKIDQYSR (97 aa). Ser-375 carries the post-translational modification Phosphoserine. Residues 423-443 form a helical membrane-spanning segment; it reads ILFPVAFAGFNLVYWIVYLSK. Topologically, residues 444–453 are extracellular; sequence DTMEVSSTVE.

This sequence belongs to the ligand-gated ion channel (TC 1.A.9) family. Gamma-aminobutyric acid receptor (TC 1.A.9.5) subfamily. GABRA6 sub-subfamily. As to quaternary structure, heteropentamer, formed by a combination of alpha (GABRA1-6), beta (GABRB1-3), gamma (GABRG1-3), delta (GABRD), epsilon (GABRE), rho (GABRR1-3), pi (GABRP) and theta (GABRQ) chains, each subunit exhibiting distinct physiological and pharmacological properties. Binds UBQLN1. In terms of tissue distribution, expressed in brain, in cerebellar granule cells.

Its subcellular location is the postsynaptic cell membrane. It localises to the cell membrane. It catalyses the reaction chloride(in) = chloride(out). Its function is as follows. Alpha subunit of the heteropentameric ligand-gated chloride channel gated by gamma-aminobutyric acid (GABA), a major inhibitory neurotransmitter in the brain. GABA-gated chloride channels, also named GABA(A) receptors (GABAAR), consist of five subunits arranged around a central pore and contain GABA active binding site(s) located at the alpha and beta subunit interface(s). When activated by GABA, GABAARs selectively allow the flow of chloride anions across the cell membrane down their electrochemical gradient. Alpha-6/GABRA6 subunits are found at both synaptic and extrasynaptic sites. Chloride influx into the postsynaptic neuron following GABAAR opening decreases the neuron ability to generate a new action potential, thereby reducing nerve transmission. Extrasynaptic alpha-6-containing receptors contribute to the tonic GABAergic inhibition. Alpha-6 subunits are also present on glutamatergic synapses. The sequence is that of Gamma-aminobutyric acid receptor subunit alpha-6 from Mus musculus (Mouse).